A 421-amino-acid polypeptide reads, in one-letter code: Gamma-glutamyl phosphate reductase (421 aa).

Belongs to the gamma-glutamyl phosphate reductase family.

The protein localises to the cytoplasm. It carries out the reaction L-glutamate 5-semialdehyde + phosphate + NADP(+) = L-glutamyl 5-phosphate + NADPH + H(+). Its pathway is amino-acid biosynthesis; L-proline biosynthesis; L-glutamate 5-semialdehyde from L-glutamate: step 2/2. Catalyzes the NADPH-dependent reduction of L-glutamate 5-phosphate into L-glutamate 5-semialdehyde and phosphate. The product spontaneously undergoes cyclization to form 1-pyrroline-5-carboxylate. In Erythrobacter litoralis (strain HTCC2594), this protein is Gamma-glutamyl phosphate reductase.